We begin with the raw amino-acid sequence, 426 residues long: tRNA(Ile)-lysidine synthase (426 aa).

21 to 26 serves as a coordination point for ATP; it reads SGGLDS.

It belongs to the tRNA(Ile)-lysidine synthase family.

The protein resides in the cytoplasm. The enzyme catalyses cytidine(34) in tRNA(Ile2) + L-lysine + ATP = lysidine(34) in tRNA(Ile2) + AMP + diphosphate + H(+). Ligates lysine onto the cytidine present at position 34 of the AUA codon-specific tRNA(Ile) that contains the anticodon CAU, in an ATP-dependent manner. Cytidine is converted to lysidine, thus changing the amino acid specificity of the tRNA from methionine to isoleucine. The chain is tRNA(Ile)-lysidine synthase from Enterobacter sp. (strain 638).